A 122-amino-acid chain; its full sequence is Large ribosomal subunit protein uL14 (122 aa).

The protein belongs to the universal ribosomal protein uL14 family. Part of the 50S ribosomal subunit. Forms a cluster with proteins L3 and L19. In the 70S ribosome, L14 and L19 interact and together make contacts with the 16S rRNA in bridges B5 and B8.

In terms of biological role, binds to 23S rRNA. Forms part of two intersubunit bridges in the 70S ribosome. This chain is Large ribosomal subunit protein uL14, found in Limosilactobacillus reuteri (strain DSM 20016) (Lactobacillus reuteri).